Reading from the N-terminus, the 154-residue chain is Aspartate carbamoyltransferase regulatory chain (154 aa).

Cys109, Cys114, Cys138, and Cys141 together coordinate Zn(2+).

The protein belongs to the PyrI family. Contains catalytic and regulatory chains. Requires Zn(2+) as cofactor.

In terms of biological role, involved in allosteric regulation of aspartate carbamoyltransferase. The protein is Aspartate carbamoyltransferase regulatory chain of Methanothrix thermoacetophila (strain DSM 6194 / JCM 14653 / NBRC 101360 / PT) (Methanosaeta thermophila).